The following is a 483-amino-acid chain: MAEFTPITIAYGDGIGPEIMEAVLYILRKAEARIRLETIEVGEKLYVKHYSSGISEQSWESIERTGVILKAPITTPQGGGYKSLNVTIRKTLQLFANIRPSVSFYPFTKTLHPNLNLTIIRENEEDLYAGIEYRQTHNMYESVKLISRTGCEKIIRYAFEYAVKNNRKKVTCLSKDNIMKFSDGIFHKVFNEIAKEYPQINNEHYIIDIGTARLATKPEIFDVIVTSNLYGDIISDVAAEISGSVGLAGSANIGEHYAMFEAVHGSAPDIAGQDIANPSGLLNAAIMMLVHIGQGDIATLIENAWKKTIEDGMHTADIYNKDHSTKKVGTKEFAEEVVKRLGQKPEKLAKADYPLVTKKQESNTTYKINTKEVKKLVGTDIFVGMNVASAHDIADKVNKLDIGNFELKTISSKGLKLWPRDTRFETISDHWCCRFMAKDGVELKHLDITKLLETLSKANIDFIKVENLFEFDGAAGYSLAQGE.

Thr-74 lines the NADP(+) pocket. D-threo-isocitrate is bound by residues Ser-83, Asn-85, Arg-89, Arg-99, and Arg-121. Residue Asp-232 participates in Mg(2+) binding. NADP(+) contacts are provided by residues 264-270 and Asn-277; that span reads HGSAPDI.

The protein belongs to the isocitrate and isopropylmalate dehydrogenases family. In terms of assembly, homodimer. Mg(2+) is required as a cofactor. It depends on Mn(2+) as a cofactor.

It carries out the reaction D-threo-isocitrate + NADP(+) = 2-oxoglutarate + CO2 + NADPH. Its function is as follows. Catalyzes the oxidative decarboxylation of isocitrate to 2-oxoglutarate and carbon dioxide with the concomitant reduction of NADP(+). This chain is Isocitrate dehydrogenase [NADP] (icd), found in Rickettsia bellii (strain RML369-C).